The sequence spans 188 residues: FMN-dependent NADPH-azoreductase (188 aa).

Belongs to the azoreductase type 2 family. In terms of assembly, homotetramer. FMN serves as cofactor.

In terms of biological role, catalyzes the reductive cleavage of azo bond in aromatic azo compounds to the corresponding amines. Requires NADPH, but not NADH, as an electron donor for its activity. This Staphylococcus aureus (strain MSSA476) protein is FMN-dependent NADPH-azoreductase (azo1).